Reading from the N-terminus, the 328-residue chain is D-cysteine desulfhydrase (328 aa).

Lysine 51 carries the N6-(pyridoxal phosphate)lysine modification.

It belongs to the ACC deaminase/D-cysteine desulfhydrase family. As to quaternary structure, homodimer. Pyridoxal 5'-phosphate serves as cofactor.

It carries out the reaction D-cysteine + H2O = hydrogen sulfide + pyruvate + NH4(+) + H(+). Catalyzes the alpha,beta-elimination reaction of D-cysteine and of several D-cysteine derivatives. It could be a defense mechanism against D-cysteine. This Salmonella choleraesuis (strain SC-B67) protein is D-cysteine desulfhydrase.